The chain runs to 328 residues: Phosphate acyltransferase (328 aa).

This sequence belongs to the PlsX family. As to quaternary structure, homodimer. Probably interacts with PlsY.

Its subcellular location is the cytoplasm. It carries out the reaction a fatty acyl-[ACP] + phosphate = an acyl phosphate + holo-[ACP]. Its pathway is lipid metabolism; phospholipid metabolism. Functionally, catalyzes the reversible formation of acyl-phosphate (acyl-PO(4)) from acyl-[acyl-carrier-protein] (acyl-ACP). This enzyme utilizes acyl-ACP as fatty acyl donor, but not acyl-CoA. In Campylobacter jejuni subsp. jejuni serotype O:23/36 (strain 81-176), this protein is Phosphate acyltransferase.